The primary structure comprises 153 residues: NAD(P)H-quinone oxidoreductase subunit N (153 aa).

The protein belongs to the complex I NdhN subunit family. NDH-1 can be composed of about 15 different subunits; different subcomplexes with different compositions have been identified which probably have different functions.

Its subcellular location is the cellular thylakoid membrane. It catalyses the reaction a plastoquinone + NADH + (n+1) H(+)(in) = a plastoquinol + NAD(+) + n H(+)(out). The catalysed reaction is a plastoquinone + NADPH + (n+1) H(+)(in) = a plastoquinol + NADP(+) + n H(+)(out). In terms of biological role, NDH-1 shuttles electrons from an unknown electron donor, via FMN and iron-sulfur (Fe-S) centers, to quinones in the respiratory and/or the photosynthetic chain. The immediate electron acceptor for the enzyme in this species is believed to be plastoquinone. Couples the redox reaction to proton translocation, and thus conserves the redox energy in a proton gradient. Cyanobacterial NDH-1 also plays a role in inorganic carbon-concentration. This is NAD(P)H-quinone oxidoreductase subunit N from Synechococcus sp. (strain CC9311).